A 234-amino-acid chain; its full sequence is Glucosamine-6-phosphate deaminase (234 aa).

Catalysis depends on Asp-62, which acts as the Proton acceptor; for enolization step. Residue Asn-128 is the For ring-opening step of the active site. His-130 (proton acceptor; for ring-opening step) is an active-site residue. Residue Glu-135 is the For ring-opening step of the active site.

This sequence belongs to the glucosamine/galactosamine-6-phosphate isomerase family. NagB subfamily.

The enzyme catalyses alpha-D-glucosamine 6-phosphate + H2O = beta-D-fructose 6-phosphate + NH4(+). Its pathway is amino-sugar metabolism; N-acetylneuraminate degradation; D-fructose 6-phosphate from N-acetylneuraminate: step 5/5. In terms of biological role, catalyzes the reversible isomerization-deamination of glucosamine 6-phosphate (GlcN6P) to form fructose 6-phosphate (Fru6P) and ammonium ion. This Ligilactobacillus salivarius (strain UCC118) (Lactobacillus salivarius) protein is Glucosamine-6-phosphate deaminase.